Reading from the N-terminus, the 407-residue chain is Zinc finger protein 260 (407 aa).

The tract at residues 1 to 21 (MLESLQPESELLHDEPDPGEK) is disordered. A compositionally biased stretch (basic and acidic residues) spans 10–21 (ELLHDEPDPGEK). The segment at 23 to 45 (YECDECRKTFSLEQHFVEHKKTH) adopts a C2H2-type 1 zinc-finger fold. The segment at 51–73 (PECTGCGEEFSKASSLTRHLRSR) adopts a C2H2-type 2; degenerate zinc-finger fold. C2H2-type zinc fingers lie at residues 79–101 (YKCGNCGRTFSQRGNFLSHQKQH), 131–153 (YACKECGKAFNGKSYLKEHEKIH), 159–181 (FECNQCGRAFSQKQYLIKHQNVH), 187–209 (FKCNECGKAFSQKENLIIHQRIH), 215–237 (YECKGCGKAFIQKSSLIRHQRSH), 243–265 (YTCKECGKAFSGKSNLTEHEKIH), 271–293 (YKCNECGTIFRQKQYLIKHHNIH), 299–321 (YECNKCGKAFSRITSLIVHVRIH), 327–349 (YECKVCGKAFCQSSSLTVHMRSH), 355–377 (YGCNECGKAFSQFSTLALHMRIH), and 383–405 (YQCSECGKAFSQKSHHIRHQRIH).

Belongs to the krueppel C2H2-type zinc-finger protein family. As to quaternary structure, binds DNA. Interacts with GATA4. Expressed in both embryonic, fetal and adult heart. Also expressed in lung, skeletal muscle and adrenal glands.

The protein localises to the nucleus. Functionally, transcription factor that acts as a cardiac regulator and an effector of alpha1-adrenergic signaling. Binds to PE response elements (PERE) present in the promoter of genes such as ANF/NPPA and acts as a direct transcriptional activator of NPPA. Also acts as a cofactor with GATA4, a key cardiac regulator. The chain is Zinc finger protein 260 (Znf260) from Rattus norvegicus (Rat).